The sequence spans 378 residues: Enoyl-[acyl-carrier-protein] reductase 1, mitochondrial (378 aa).

Catalysis depends on Y59, which acts as the Proton donor. NADP(+) contacts are provided by residues N151, 180–183 (NSQV), 203–206 (RDGK), 284–287 (YGGM), 309–311 (YWL), and K372.

The protein belongs to the zinc-containing alcohol dehydrogenase family. Quinone oxidoreductase subfamily. In terms of assembly, homodimer.

Its subcellular location is the mitochondrion matrix. The enzyme catalyses a 2,3-saturated acyl-[ACP] + NADP(+) = a (2E)-enoyl-[ACP] + NADPH + H(+). Its function is as follows. Catalyzes the NADPH-dependent reduction of trans-2-enoyl thioesters in mitochondrial fatty acid synthesis (fatty acid synthesis type II). Fatty acid chain elongation in mitochondria uses acyl carrier protein (ACP) as an acyl group carrier, but the enzyme accepts both ACP and CoA thioesters as substrates in vitro. Required for respiration and the maintenance of the mitochondrial compartment. The polypeptide is Enoyl-[acyl-carrier-protein] reductase 1, mitochondrial (ETR1) (Debaryomyces hansenii (strain ATCC 36239 / CBS 767 / BCRC 21394 / JCM 1990 / NBRC 0083 / IGC 2968) (Yeast)).